We begin with the raw amino-acid sequence, 89 residues long: Putative regulatory protein CLL_A1210 (89 aa).

It belongs to the RemA family.

The protein is Putative regulatory protein CLL_A1210 of Clostridium botulinum (strain Eklund 17B / Type B).